We begin with the raw amino-acid sequence, 3969 residues long: Histone-lysine N-methyltransferase 2A (3969 aa).

Disordered stretches follow at residues 1–108 (MAHS…LLRV), 132–253 (VFGE…EDSL), and 301–352 (RRRG…RQSP). A Menin-binding motif (MBM) motif is present at residues 6–25 (RWRFPARPGTTGGGGGGGRR). Residues 15–29 (TTGGGGGGGRRGLGG) show a composition bias toward gly residues. Composition is skewed to low complexity over residues 59–69 (AVAAAAAAAGS) and 77–104 (GAAA…SGPA). The Integrase domain-binding motif 1 (IBM1) motif lies at 123-134 (GTNLRRFRAVFG). Ser-136 and Ser-142 each carry phosphoserine; by CK2. Residues 147–152 (QFLGFG) carry the Integrase domain-binding motif 2 (IBM2) motif. Ser-153 carries the post-translational modification Phosphoserine. Residues 169–180 (KTSPRKPRGRPR) constitute a DNA-binding region (a.T hook 1). A Phosphoserine modification is found at Ser-197. Composition is skewed to basic and acidic residues over residues 202–220 (SETK…SIEK) and 237–253 (HGKD…EDSL). The a.T hook 2 DNA-binding region spans 217-227 (SIEKKRGRPPT). Lys-239 carries the post-translational modification N6-acetyllysine. Residues 301 to 309 (RRRGRPPST) constitute a DNA-binding region (a.T hook 3). Positions 323 to 347 (ELEKPQKVRKDKEGTPPLTKEDKTV) are enriched in basic and acidic residues. Lys-373 carries the post-translational modification N6-acetyllysine. Positions 445–585 (STPNSRFSAP…SSISDHTPWL (141 aa)) are disordered. The span at 452-491 (SAPSCGSSEKSSAASQHSSQMSSDSSRSSSPSVDTSTDSQ) shows a compositional bias: low complexity. Ser-518 is modified (phosphoserine). Over residues 546 to 559 (LSTLQSAPQQQTSS) the composition is skewed to low complexity. Over residues 560–573 (SPPPPLLTPPPPLQ) the composition is skewed to pro residues. Position 636 is an N6-acetyllysine (Lys-636). Ser-680 bears the Phosphoserine mark. Disordered regions lie at residues 713–780 (ESVT…SSSL), 798–949 (FPSH…TSVT), 1038–1066 (EKSK…VRGP), and 1106–1166 (SSMG…VPED). Residues 716–732 (TLPSNRTSAGTSSSGVS) are compositionally biased toward polar residues. The segment covering 762-780 (LSSSELSPLTPPSSVSSSL) has biased composition (low complexity). A compositionally biased stretch (polar residues) spans 798-808 (FPSHSLTQSGE). A compositionally biased stretch (low complexity) spans 820-841 (TSAPAEPFSSSSPTPLFPWFTP). Position 840 is a phosphothreonine (Thr-840). Positions 846 to 890 (ERGRNKDKAPEELSKDRDADKSVEKDKSRERDREREKENKRESRK) are enriched in basic and acidic residues. 2 positions are modified to phosphoserine: Ser-926 and Ser-1056. The span at 1043 to 1062 (LKQTDQPKAQGQESDSSETS) shows a compositional bias: polar residues. Lys-1130 carries the post-translational modification N6-acetyllysine. The segment at 1147–1195 (KKGRRSRRCGQCPGCQVPEDCGVCTNCLDKPKFGGRNIKKQCCKMRKCQ) adopts a CXXC-type zinc-finger fold. Cys-1155, Cys-1158, Cys-1161, Cys-1167, Cys-1170, Cys-1173, Cys-1189, and Cys-1194 together coordinate Zn(2+). Positions 1200–1375 (MPSKAYLQKQ…PPVNKQENAG (176 aa)) are disordered. The span at 1220-1232 (SKTSEKKDSKESS) shows a compositional bias: basic and acidic residues. Residues 1233-1243 (VVKNVVDSSQK) are compositionally biased toward low complexity. Lys-1235 bears the N6-acetyllysine mark. The segment covering 1248–1273 (AREDPAPKKSSSEPPPRKPVEEKSEE) has biased composition (basic and acidic residues). The span at 1284–1300 (KQATTPASRKSSKQVSQ) shows a compositional bias: polar residues. Over residues 1304–1313 (VIPPQPPTTG) the composition is skewed to pro residues. 3 consecutive PHD-type zinc fingers follow at residues 1431–1482 (RVVC…CKFC), 1479–1533 (CKFC…CVRC), and 1566–1627 (GNFC…CTER). Residues 1584-1600 (KMMQCGKCDRWVHSKCE) are interaction with histone H3K4me3. The Bromo domain maps to 1635 to 1765 (ALEKELQISL…SFFIRQMERV (131 aa)). 2 disordered regions span residues 1663–1713 (YRQA…GVKR) and 1806–1869 (QERE…GIED). Pro residues predominate over residues 1826–1847 (APKPKGPGEPDSPTPLHPPTPP). Residue Ser-1837 is modified to Phosphoserine. The residue at position 1845 (Thr-1845) is a Phosphothreonine. Ser-1858 carries the post-translational modification Phosphoserine. Residues 1870-1910 (NRQCALCLTYGDDSANDAGRLLYIGQNEWTHVNCALWSAEV) form a C2HC pre-PHD-type zinc finger. A PHD-type 4 zinc finger spans residues 1931 to 1978 (LRCEFCQKPGATVGCCLTSCTSNYHFMCSRAKNCVFLDDKKVYCQRHR). In terms of domain architecture, FYR N-terminal spans 2018 to 2074 (NIHMMIGSMTIDCLGILNDLSDCEDKLFPIGYQCSRVYWSTTDARKRCVYTCKIVEC). Disordered regions lie at residues 2081-2133 (PDIN…TSGS), 2145-2232 (IRTP…TTGT), 2275-2333 (NKNS…KLAP), 2373-2460 (RGQR…EGNL), 2475-2618 (GQRP…RYPR), 2647-2675 (FYSS…STSD), and 2713-2821 (KISQ…KNLL). A compositionally biased stretch (polar residues) spans 2095 to 2115 (IAHSPTSFTESSSKESQNTAE). Residue Ser-2098 is modified to Phosphoserine. Thr-2147 bears the Phosphothreonine mark. Ser-2151 and Ser-2201 each carry phosphoserine. The segment covering 2214–2232 (RTGNTYSRNNVSSVSTTGT) has biased composition (polar residues). Positions 2283-2302 (SSSSEMKQSSASDLVSKSSS) are enriched in low complexity. 2 stretches are compositionally biased toward polar residues: residues 2310-2319 (VLSSKSSEGS) and 2406-2421 (GMSN…MGSS). Basic and acidic residues predominate over residues 2432–2442 (SCKETFKEKHS). Position 2525 is a phosphothreonine (Thr-2525). Residue Lys-2528 forms a Glycyl lysine isopeptide (Lys-Gly) (interchain with G-Cter in SUMO2) linkage. 2 stretches are compositionally biased toward polar residues: residues 2543 to 2563 (SPAS…SASE) and 2573 to 2592 (PSPN…QNLP). Position 2611 is a phosphoserine (Ser-2611). Over residues 2726-2741 (SDTSVTATTRKSSQIP) the composition is skewed to polar residues. Basic and acidic residues predominate over residues 2744-2782 (NGKENGTENLKIDRPEDAGEKEHVTKSSVGHKNEPKMDN). Positions 2784–2795 (HSVSRVKTQGQD) are enriched in polar residues. Ser-2796 carries the phosphoserine modification. Low complexity predominate over residues 2796-2805 (SLEAQLSSLE). A compositionally biased stretch (polar residues) spans 2812–2821 (TSTPSDKNLL). A 9aaTAD motif is present at residues 2847 to 2855 (SDIMDFVLK). The residue at position 2955 (Ser-2955) is a Phosphoserine. An N6-acetyllysine modification is found at Lys-2958. Disordered regions lie at residues 2961–3064 (TITE…NAAV) and 3166–3244 (PAAT…SNIA). Polar residues-rich tracts occupy residues 2963-2972 (TEKSVASSES) and 3016-3030 (HGNN…STPG). Ser-3036 carries the phosphoserine modification. The segment covering 3039-3064 (VPIQNQKYVPNSTDSPGPSQISNAAV) has biased composition (polar residues). A compositionally biased stretch (low complexity) spans 3171–3182 (SSFPPNISNPPS). Polar residues predominate over residues 3198 to 3216 (VSESSQRTDLSTTVATPSS). A compositionally biased stretch (basic residues) spans 3218–3233 (LKKRPISRLQTRKNKK). Position 3372 is a phosphothreonine (Thr-3372). Lys-3462 carries the post-translational modification N6-acetyllysine. 2 disordered regions span residues 3464–3608 (GIHS…GQPA) and 3620–3643 (TQNP…SNFS). Positions 3476-3489 (SGPQVSNFTQTVDA) are enriched in polar residues. The span at 3508-3529 (SPTSPGGSPSSPSSGQRSASPS) shows a compositional bias: low complexity. Phosphoserine is present on residues Ser-3511, Ser-3515, and Ser-3527. The span at 3591-3603 (QDTASVEQSSQKE) shows a compositional bias: polar residues. The 82-residue stretch at 3666 to 3747 (KKGLVFEISS…KHCRNYKFRF (82 aa)) folds into the FYR C-terminal domain. The short motif at 3762 to 3767 (GSARAE) is the WDR5 interaction motif (WIN) element. The interval 3785–3808 (HRQPPEYNPNDEEEEEVQLKSARR) is disordered. The region spanning 3829-3945 (EAVGVYRSPI…RGEELTYDYK (117 aa)) is the SET domain. 2 residues coordinate S-adenosyl-L-methionine: His-3839 and Arg-3841. Cys-3882 carries the S-methylcysteine; by autocatalysis modification. Residues Tyr-3883 and 3906 to 3907 (NH) each bind S-adenosyl-L-methionine. Cys-3909 and Cys-3957 together coordinate Zn(2+). Residues 3953-3969 (NKLPCNCGAKKCRKFLN) enclose the Post-SET domain. Asn-3958 contributes to the S-adenosyl-L-methionine binding site. Positions 3959 and 3964 each coordinate Zn(2+).

Belongs to the class V-like SAM-binding methyltransferase superfamily. Histone-lysine methyltransferase family. TRX/MLL subfamily. MLL cleavage product N320 heterodimerizes with MLL cleavage product C180 (via SET and FYRC domains). Component of some MLL1/MLL complex, at least composed of the core components KMT2A/MLL1, ASH2L, HCFC1/HCF1, HCFC2, WDR5, DPY30 and RBBP5, as well as the facultative components BACC1, CHD8, E2F6, HSP70, INO80C, KANSL1, LAS1L, MAX, MCRS1, MEN1, MGA, KAT8/MOF, PELP1, PHF20, PRP31, RING2, RUVB1/TIP49A, RUVB2/TIP49B, SENP3, TAF1, TAF4, TAF6, TAF7, TAF9 and TEX10. Forms a core complex with the evolutionary conserved subcomplex WRAD composed of WDR5, RBBP5, ASH2L/ASH2 and DPY30 subunits; WRAD differentially stimulates the methyltransferase activity. Interacts (via WIN motif) with WDR5; the interaction is direct. Interaction with WDR5 is required for stable interaction with ASH2L and RBBP5, and thereby also for optimal histone methyltransferase activity. Interacts with KAT8/MOF; the interaction is direct. Interacts with SBF1 and PPP1R15A. Interacts with ZNF335. Interacts with CLOCK and BMAL1 in a circadian manner. Interacts with PPIE; this results in decreased histone H3 methyltransferase activity. Interacts with CREBBP. Interacts with the WRAD complex composed of WDR5, RBBP5, ASH2L and DPY30. Interacts (via MBM motif) with MEN1. Interacts (via IBM motifs) with PSIP1 (via IBD domain) with moderate affinity whereas the KMT2A-MEN1 complex interacts with a greater affinity; MEN1 enhances interaction of KMT2A with PSIP1. Phosphorylation increases its affinity for PSIP1. Forms a complex with CREBBP and CREB1. In terms of assembly, (Microbial infection) Interacts with herpes virus 8/HHV-8 protein LANA1; this interaction regulates the MLL1 histone methyltransferase activity on viral DNA. Proteolytic cleavage by TASP1 generates MLL cleavage product N320 and MLL cleavage product C180, which reassemble through a non-covalent association. 2 cleavage sites exist, cleavage site 1 (CS1) and cleavage site 2 (CS2), to generate MLL cleavage products N320 and C180. CS2 is the major site. In terms of processing, phosphorylation increases its interaction with PSIP1. Post-translationally, auto-methylated at Cys-3882: auto-methylation is inhibited by the WRAD complex and unmodified histone H3. Heart, lung, brain and T- and B-lymphocytes.

The protein localises to the nucleus. It carries out the reaction L-lysyl(4)-[histone H3] + S-adenosyl-L-methionine = N(6)-methyl-L-lysyl(4)-[histone H3] + S-adenosyl-L-homocysteine + H(+). It catalyses the reaction N(6)-methyl-L-lysyl(4)-[histone H3] + S-adenosyl-L-methionine = N(6),N(6)-dimethyl-L-lysyl(4)-[histone H3] + S-adenosyl-L-homocysteine + H(+). The catalysed reaction is L-cysteinyl-[protein] + S-adenosyl-L-methionine = S-methyl-L-cysteinyl-[protein] + S-adenosyl-L-homocysteine + H(+). In terms of biological role, histone methyltransferase that plays an essential role in early development and hematopoiesis. Catalytic subunit of the MLL1/MLL complex, a multiprotein complex that mediates both methylation of 'Lys-4' of histone H3 (H3K4me) complex and acetylation of 'Lys-16' of histone H4 (H4K16ac). Catalyzes methyl group transfer from S-adenosyl-L-methionine to the epsilon-amino group of 'Lys-4' of histone H3 (H3K4) via a non-processive mechanism. Part of chromatin remodeling machinery predominantly forms H3K4me1 and H3K4me2 methylation marks at active chromatin sites where transcription and DNA repair take place. Has weak methyltransferase activity by itself, and requires other component of the MLL1/MLL complex to obtain full methyltransferase activity. Has no activity toward histone H3 phosphorylated on 'Thr-3', less activity toward H3 dimethylated on 'Arg-8' or 'Lys-9', while it has higher activity toward H3 acetylated on 'Lys-9'. Binds to unmethylated CpG elements in the promoter of target genes and helps maintain them in the nonmethylated state. Required for transcriptional activation of HOXA9. Promotes PPP1R15A-induced apoptosis. Plays a critical role in the control of circadian gene expression and is essential for the transcriptional activation mediated by the CLOCK-BMAL1 heterodimer. Establishes a permissive chromatin state for circadian transcription by mediating a rhythmic methylation of 'Lys-4' of histone H3 (H3K4me) and this histone modification directs the circadian acetylation at H3K9 and H3K14 allowing the recruitment of CLOCK-BMAL1 to chromatin. Also has auto-methylation activity on Cys-3882 in absence of histone H3 substrate. The sequence is that of Histone-lysine N-methyltransferase 2A (KMT2A) from Homo sapiens (Human).